A 186-amino-acid polypeptide reads, in one-letter code: Large ribosomal subunit protein eL18 (186 aa).

It belongs to the eukaryotic ribosomal protein eL18 family. As to quaternary structure, component of the large ribosomal subunit. Mature ribosomes consist of a small (40S) and a large (60S) subunit. The 40S subunit contains about 32 different proteins and 1 molecule of RNA (18S). The 60S subunit contains 45 different proteins and 3 molecules of RNA (25S, 5.8S and 5S).

It is found in the cytoplasm. In terms of biological role, component of the ribosome, a large ribonucleoprotein complex responsible for the synthesis of proteins in the cell. The small ribosomal subunit (SSU) binds messenger RNAs (mRNAs) and translates the encoded message by selecting cognate aminoacyl-transfer RNA (tRNA) molecules. The large subunit (LSU) contains the ribosomal catalytic site termed the peptidyl transferase center (PTC), which catalyzes the formation of peptide bonds, thereby polymerizing the amino acids delivered by tRNAs into a polypeptide chain. The nascent polypeptides leave the ribosome through a tunnel in the LSU and interact with protein factors that function in enzymatic processing, targeting, and the membrane insertion of nascent chains at the exit of the ribosomal tunnel. The chain is Large ribosomal subunit protein eL18 from Candida albicans (strain SC5314 / ATCC MYA-2876) (Yeast).